A 209-amino-acid polypeptide reads, in one-letter code: 3-dehydroquinate dehydratase (209 aa).

3-dehydroquinate is bound by residues serine 6, 25-27, and arginine 55; that span reads ELR. The Proton donor/acceptor role is filled by histidine 109. Lysine 134 acts as the Schiff-base intermediate with substrate in catalysis. Residues arginine 172 and glutamine 195 each contribute to the 3-dehydroquinate site.

The protein belongs to the type-I 3-dehydroquinase family. In terms of assembly, homodimer.

It catalyses the reaction 3-dehydroquinate = 3-dehydroshikimate + H2O. Its pathway is metabolic intermediate biosynthesis; chorismate biosynthesis; chorismate from D-erythrose 4-phosphate and phosphoenolpyruvate: step 3/7. Involved in the third step of the chorismate pathway, which leads to the biosynthesis of aromatic amino acids. Catalyzes the cis-dehydration of 3-dehydroquinate (DHQ) and introduces the first double bond of the aromatic ring to yield 3-dehydroshikimate. In Methanoregula boonei (strain DSM 21154 / JCM 14090 / 6A8), this protein is 3-dehydroquinate dehydratase.